The sequence spans 584 residues: Aspartate--tRNA(Asp/Asn) ligase (584 aa).

E173 serves as a coordination point for L-aspartate. Residues Q197–K200 form an aspartate region. R219 contributes to the L-aspartate binding site. ATP is bound by residues R219–E221 and Q228. An L-aspartate-binding site is contributed by H446. E476 is an ATP binding site. Residue R483 participates in L-aspartate binding. Residue G528–R531 participates in ATP binding.

The protein belongs to the class-II aminoacyl-tRNA synthetase family. Type 1 subfamily. As to quaternary structure, homodimer.

It is found in the cytoplasm. The catalysed reaction is tRNA(Asx) + L-aspartate + ATP = L-aspartyl-tRNA(Asx) + AMP + diphosphate. Its function is as follows. Aspartyl-tRNA synthetase with relaxed tRNA specificity since it is able to aspartylate not only its cognate tRNA(Asp) but also tRNA(Asn). Reaction proceeds in two steps: L-aspartate is first activated by ATP to form Asp-AMP and then transferred to the acceptor end of tRNA(Asp/Asn). This is Aspartate--tRNA(Asp/Asn) ligase from Sulfurovum sp. (strain NBC37-1).